Consider the following 167-residue polypeptide: Translation initiation factor IF-3 (167 aa).

It belongs to the IF-3 family. Monomer.

The protein localises to the cytoplasm. In terms of biological role, IF-3 binds to the 30S ribosomal subunit and shifts the equilibrium between 70S ribosomes and their 50S and 30S subunits in favor of the free subunits, thus enhancing the availability of 30S subunits on which protein synthesis initiation begins. This is Translation initiation factor IF-3 from Bacillus anthracis.